Reading from the N-terminus, the 238-residue chain is Probable 2-phosphosulfolactate phosphatase (238 aa).

It belongs to the ComB family. Mg(2+) is required as a cofactor.

The catalysed reaction is (2R)-O-phospho-3-sulfolactate + H2O = (2R)-3-sulfolactate + phosphate. This is Probable 2-phosphosulfolactate phosphatase from Clostridium botulinum (strain Alaska E43 / Type E3).